Consider the following 173-residue polypeptide: Thiol-disulfide oxidoreductase ResA (173 aa).

A helical; Signal-anchor for type II membrane protein membrane pass occupies residues 10–29 (VIILLILCGAVGFTLYQGYF). In terms of domain architecture, Thioredoxin spans 35–173 (MEIGKEAPNF…LEEYLKKITP (139 aa)). Cysteines 73 and 76 form a disulfide.

The protein belongs to the thioredoxin family. ResA subfamily.

The protein localises to the cell membrane. The protein operates within protein modification; cytochrome c assembly. Its function is as follows. Thiol-disulfide oxidoreductase which is required in disulfide reduction during c-type cytochrome synthesis. May accept reducing equivalents from CcdA, leading to breakage of disulfide bonds in apocytochrome c; following this reduction heme can be covalently attached. The polypeptide is Thiol-disulfide oxidoreductase ResA (Bacillus thuringiensis subsp. konkukian (strain 97-27)).